A 432-amino-acid polypeptide reads, in one-letter code: Gamma-glutamyl phosphate reductase (432 aa).

The protein belongs to the gamma-glutamyl phosphate reductase family.

The protein localises to the cytoplasm. It carries out the reaction L-glutamate 5-semialdehyde + phosphate + NADP(+) = L-glutamyl 5-phosphate + NADPH + H(+). It functions in the pathway amino-acid biosynthesis; L-proline biosynthesis; L-glutamate 5-semialdehyde from L-glutamate: step 2/2. Its function is as follows. Catalyzes the NADPH-dependent reduction of L-glutamate 5-phosphate into L-glutamate 5-semialdehyde and phosphate. The product spontaneously undergoes cyclization to form 1-pyrroline-5-carboxylate. This is Gamma-glutamyl phosphate reductase from Brachyspira hyodysenteriae (strain ATCC 49526 / WA1).